The following is a 110-amino-acid chain: Protein RnfH (110 aa).

The tract at residues 86–110 is disordered; the sequence is RQRRVEKTRKAGSIEGRRWQNKDSR. Over residues 100–110 the composition is skewed to basic and acidic residues; it reads EGRRWQNKDSR.

The protein belongs to the UPF0125 (RnfH) family.

This chain is Protein RnfH, found in Paraburkholderia xenovorans (strain LB400).